Consider the following 226-residue polypeptide: Uracil-DNA glycosylase (226 aa).

The Proton acceptor role is filled by D64.

Belongs to the uracil-DNA glycosylase (UDG) superfamily. UNG family.

The protein localises to the cytoplasm. The catalysed reaction is Hydrolyzes single-stranded DNA or mismatched double-stranded DNA and polynucleotides, releasing free uracil.. In terms of biological role, excises uracil residues from the DNA which can arise as a result of misincorporation of dUMP residues by DNA polymerase or due to deamination of cytosine. This is Uracil-DNA glycosylase from Proteus mirabilis (strain HI4320).